The following is a 962-amino-acid chain: Translation initiation factor IF-2 (962 aa).

Disordered regions lie at residues 122–263 (EVGV…EPAR), 293–327 (TEEVEVKEAPRKKRPRPEEFEKEAAERKAKGTRRK), and 341–362 (IAAQDDRGRLKGDKRRPFAKEP). Low complexity predominate over residues 156-173 (AVEPQTVVPPVAAPAAEV). Basic and acidic residues predominate over residues 188–202 (KPPEEKETKVKHAEP). Residues 244–256 (RPKKAKKRRRKKV) show a composition bias toward basic residues. 2 stretches are compositionally biased toward basic and acidic residues: residues 308-327 (RPEEFEKEAAERKAKGTRRK) and 344-362 (QDDRGRLKGDKRRPFAKEP). The tr-type G domain maps to 455 to 624 (RRPPVITVMG…LLQAELLELK (170 aa)). Residues 464-471 (GHVDHGKT) form a G1 region. Position 464–471 (464–471 (GHVDHGKT)) interacts with GTP. Residues 489–493 (GITQH) form a G2 region. The G3 stretch occupies residues 510–513 (DTPG). GTP contacts are provided by residues 510–514 (DTPGH) and 564–567 (NKVD). The interval 564-567 (NKVD) is G4. The G5 stretch occupies residues 600–602 (SAK).

Belongs to the TRAFAC class translation factor GTPase superfamily. Classic translation factor GTPase family. IF-2 subfamily.

Its subcellular location is the cytoplasm. Functionally, one of the essential components for the initiation of protein synthesis. Protects formylmethionyl-tRNA from spontaneous hydrolysis and promotes its binding to the 30S ribosomal subunits. Also involved in the hydrolysis of GTP during the formation of the 70S ribosomal complex. The polypeptide is Translation initiation factor IF-2 (Syntrophobacter fumaroxidans (strain DSM 10017 / MPOB)).